We begin with the raw amino-acid sequence, 216 residues long: Glycerol-3-phosphate acyltransferase (216 aa).

5 helical membrane passes run 11 to 31 (LVLG…FGLV), 62 to 82 (LALA…LVAS), 95 to 115 (VLAG…PIWL), 132 to 152 (ATAW…AALF), and 171 to 191 (LVLA…LAWI).

Belongs to the PlsY family. As to quaternary structure, probably interacts with PlsX.

The protein resides in the cell inner membrane. It carries out the reaction an acyl phosphate + sn-glycerol 3-phosphate = a 1-acyl-sn-glycero-3-phosphate + phosphate. It participates in lipid metabolism; phospholipid metabolism. In terms of biological role, catalyzes the transfer of an acyl group from acyl-phosphate (acyl-PO(4)) to glycerol-3-phosphate (G3P) to form lysophosphatidic acid (LPA). This enzyme utilizes acyl-phosphate as fatty acyl donor, but not acyl-CoA or acyl-ACP. This Rhodospirillum rubrum (strain ATCC 11170 / ATH 1.1.1 / DSM 467 / LMG 4362 / NCIMB 8255 / S1) protein is Glycerol-3-phosphate acyltransferase.